We begin with the raw amino-acid sequence, 962 residues long: Phagocyte signaling-impaired protein (962 aa).

3 TPR repeats span residues 45-78 (LCAR…KPTD), 79-112 (DSTL…NPGN), and 523-560 (QIQL…FTNS). Residues 856-880 (TKVKKKQGDNKTQDTPQPVSEKERS) form a disordered region.

It belongs to the MDM20/NAA25 family. Component of the N-terminal acetyltransferase B (NatB) complex.

The protein localises to the lysosome. Functionally, non-catalytic subunit of the NatB complex which catalyzes acetylation of the N-terminal methionine residues of proteins beginning with Met-Asp or Met-Glu. Has 2 roles in the larval immune response: required both for the phagocytic degradation of internalized bacteria and for the induction of Defensin in the fat body. Within the phagocytic blood cells, has a role in detection of infection and activation of the humoral immune response. The protein is Phagocyte signaling-impaired protein of Drosophila pseudoobscura pseudoobscura (Fruit fly).